Consider the following 508-residue polypeptide: ATP synthase subunit alpha (508 aa).

ATP is bound at residue 170–177 (GDRQTGKT).

Belongs to the ATPase alpha/beta chains family. As to quaternary structure, F-type ATPases have 2 components, CF(1) - the catalytic core - and CF(0) - the membrane proton channel. CF(1) has five subunits: alpha(3), beta(3), gamma(1), delta(1), epsilon(1). CF(0) has three main subunits: a(1), b(2) and c(9-12). The alpha and beta chains form an alternating ring which encloses part of the gamma chain. CF(1) is attached to CF(0) by a central stalk formed by the gamma and epsilon chains, while a peripheral stalk is formed by the delta and b chains.

The protein resides in the cell inner membrane. It carries out the reaction ATP + H2O + 4 H(+)(in) = ADP + phosphate + 5 H(+)(out). Functionally, produces ATP from ADP in the presence of a proton gradient across the membrane. The alpha chain is a regulatory subunit. The protein is ATP synthase subunit alpha of Dictyoglomus turgidum (strain DSM 6724 / Z-1310).